The sequence spans 713 residues: Elongation factor G (713 aa).

Positions 8–290 (ERYRNFGIMA…GVIQLLPSPV (283 aa)) constitute a tr-type G domain. Residues 17-24 (AHIDAGKT), 88-92 (DTPGH), and 142-145 (NKMD) contribute to the GTP site.

The protein belongs to the TRAFAC class translation factor GTPase superfamily. Classic translation factor GTPase family. EF-G/EF-2 subfamily.

It is found in the cytoplasm. Its function is as follows. Catalyzes the GTP-dependent ribosomal translocation step during translation elongation. During this step, the ribosome changes from the pre-translocational (PRE) to the post-translocational (POST) state as the newly formed A-site-bound peptidyl-tRNA and P-site-bound deacylated tRNA move to the P and E sites, respectively. Catalyzes the coordinated movement of the two tRNA molecules, the mRNA and conformational changes in the ribosome. The sequence is that of Elongation factor G from Stenotrophomonas maltophilia (strain K279a).